The chain runs to 168 residues: Heat shock protein beta-9 (168 aa).

Positions 1–12 are enriched in polar residues; sequence MQRVGSSFSTGQ. Disordered regions lie at residues 1–25, 83–104, and 129–168; these read MQRV…SRCP, TGQR…EQSV, and LWLR…VKNP. A sHSP domain is found at 38–151; it reads LPVRLLRDEV…EAQTGQSQKP (114 aa). The segment covering 86-104 has biased composition (basic and acidic residues); that stretch reads RQHESNDPSRGRYRMEQSV. Positions 158-168 are enriched in polar residues; sequence SSLQNESVKNP.

It belongs to the small heat shock protein (HSP20) family. In terms of tissue distribution, testis specific.

The protein resides in the cytoplasm. It is found in the nucleus. This Mus musculus (Mouse) protein is Heat shock protein beta-9 (Hspb9).